The sequence spans 190 residues: Elongation factor P (190 aa).

The protein belongs to the elongation factor P family.

It localises to the cytoplasm. Its pathway is protein biosynthesis; polypeptide chain elongation. Involved in peptide bond synthesis. Stimulates efficient translation and peptide-bond synthesis on native or reconstituted 70S ribosomes in vitro. Probably functions indirectly by altering the affinity of the ribosome for aminoacyl-tRNA, thus increasing their reactivity as acceptors for peptidyl transferase. The polypeptide is Elongation factor P (Hyphomonas neptunium (strain ATCC 15444)).